An 84-amino-acid polypeptide reads, in one-letter code: MAHKKAGGSTRNGRDSNAQRLGIKCFGGELIPAGSIIVRQRGTKFHPGKNVGCGKDHTIFATVKGKVEFKKKGIKKRTYINIVR.

The protein belongs to the bacterial ribosomal protein bL27 family.

The chain is Large ribosomal subunit protein bL27 from Buchnera aphidicola subsp. Schizaphis graminum (strain Sg).